Consider the following 219-residue polypeptide: ATP-dependent Clp protease proteolytic subunit 3 (219 aa).

Ser-112 (nucleophile) is an active-site residue. The active site involves His-137.

This sequence belongs to the peptidase S14 family. Fourteen ClpP subunits assemble into 2 heptameric rings which stack back to back to give a disk-like structure with a central cavity, resembling the structure of eukaryotic proteasomes.

The protein resides in the cytoplasm. It catalyses the reaction Hydrolysis of proteins to small peptides in the presence of ATP and magnesium. alpha-casein is the usual test substrate. In the absence of ATP, only oligopeptides shorter than five residues are hydrolyzed (such as succinyl-Leu-Tyr-|-NHMec, and Leu-Tyr-Leu-|-Tyr-Trp, in which cleavage of the -Tyr-|-Leu- and -Tyr-|-Trp bonds also occurs).. Functionally, cleaves peptides in various proteins in a process that requires ATP hydrolysis. Has a chymotrypsin-like activity. Plays a major role in the degradation of misfolded proteins. The polypeptide is ATP-dependent Clp protease proteolytic subunit 3 (Streptomyces avermitilis (strain ATCC 31267 / DSM 46492 / JCM 5070 / NBRC 14893 / NCIMB 12804 / NRRL 8165 / MA-4680)).